A 397-amino-acid polypeptide reads, in one-letter code: Cathepsin E-B (397 aa).

Residues 1–16 (MRQILVLLLFVTLVYG) form the signal peptide. Residues 17 to 49 (LIRVPLKRQKSIRKTPKEKGKLSHVWTQQGIDM) constitute a propeptide, activation peptide. The 312-residue stretch at 74–385 (YFGEISIGTP…DRGNNRVGLA (312 aa)) folds into the Peptidase A1 domain. Residue N86 is glycosylated (N-linked (GlcNAc...) asparagine). Residue D92 is part of the active site. A disulfide bridge connects residues C105 and C110. N130 carries an N-linked (GlcNAc...) asparagine glycan. A disulfide bridge connects residues C268 and C272. The active site involves D277. Cysteines 310 and 344 form a disulfide.

Belongs to the peptidase A1 family. Homodimer; disulfide-linked. Glycosylated. Contains high mannose-type oligosaccharide. In terms of tissue distribution, expressed predominantly in the anterior and posterior adult stomach and at much lower levels in the larval foregut.

Its subcellular location is the endosome. The catalysed reaction is Similar to cathepsin D, but slightly broader specificity.. Its function is as follows. May have a role in immune function. Probably involved in the processing of antigenic peptides during MHC class II-mediated antigen presentation. This Xenopus laevis (African clawed frog) protein is Cathepsin E-B (ctse-b).